A 252-amino-acid polypeptide reads, in one-letter code: ATP synthase subunit a (252 aa).

6 helical membrane-spanning segments follow: residues 29 to 49 (FTNV…FLFI), 87 to 107 (FFPL…IGLF), 116 to 136 (QIMI…GYGF), 146 to 166 (LFVP…IEVI), 183 to 205 (MLAG…ELGI), and 219 to 239 (VAIT…FTVL).

This sequence belongs to the ATPase A chain family. As to quaternary structure, F-type ATPases have 2 components, CF(1) - the catalytic core - and CF(0) - the membrane proton channel. CF(1) has five subunits: alpha(3), beta(3), gamma(1), delta(1), epsilon(1). CF(0) has three main subunits: a(1), b(2) and c(9-12). The alpha and beta chains form an alternating ring which encloses part of the gamma chain. CF(1) is attached to CF(0) by a central stalk formed by the gamma and epsilon chains, while a peripheral stalk is formed by the delta and b chains.

It localises to the cell inner membrane. Its function is as follows. Key component of the proton channel; it plays a direct role in the translocation of protons across the membrane. The protein is ATP synthase subunit a of Bartonella quintana (strain Toulouse) (Rochalimaea quintana).